The following is a 245-amino-acid chain: Transcriptional activator protein ExpR (245 aa).

The HTH luxR-type domain maps to 173-238 (RSNDKDIFSQ…HAIRLGIELQ (66 aa)). The H-T-H motif DNA-binding region spans 197–216 (YQEIALILDIKTGTVKFHIG).

This sequence belongs to the autoinducer-regulated transcriptional regulatory protein family.

Functionally, functions as an OHLL responsive transcriptional regulator that acts in virulence (soft rot disease) through the activation of genes for plant tissue macerating enzymes. The chain is Transcriptional activator protein ExpR (expR) from Pectobacterium parmentieri.